Here is a 242-residue protein sequence, read N- to C-terminus: ATP synthase subunit b 2 (242 aa).

A helical transmembrane segment spans residues 4–24 (LLAISSLTLLASLVLLVVSPA). A disordered region spans residues 43–74 (ADSEDGDHDHDHEGDDHGHDEAAGDEHGHGDG). Residues 49-74 (DHDHDHEGDDHGHDEAAGDEHGHGDG) show a composition bias toward basic and acidic residues.

Belongs to the ATPase B chain family. In terms of assembly, F-type ATPases have 2 components, F(1) - the catalytic core - and F(0) - the membrane proton channel. F(1) has five subunits: alpha(3), beta(3), gamma(1), delta(1), epsilon(1). F(0) has three main subunits: a(1), b(2) and c(10-14). The alpha and beta chains form an alternating ring which encloses part of the gamma chain. F(1) is attached to F(0) by a central stalk formed by the gamma and epsilon chains, while a peripheral stalk is formed by the delta and b chains.

The protein resides in the cell inner membrane. Its function is as follows. F(1)F(0) ATP synthase produces ATP from ADP in the presence of a proton or sodium gradient. F-type ATPases consist of two structural domains, F(1) containing the extramembraneous catalytic core and F(0) containing the membrane proton channel, linked together by a central stalk and a peripheral stalk. During catalysis, ATP synthesis in the catalytic domain of F(1) is coupled via a rotary mechanism of the central stalk subunits to proton translocation. Functionally, component of the F(0) channel, it forms part of the peripheral stalk, linking F(1) to F(0). This chain is ATP synthase subunit b 2, found in Rhodopirellula baltica (strain DSM 10527 / NCIMB 13988 / SH1).